We begin with the raw amino-acid sequence, 305 residues long: Glycine--tRNA ligase alpha subunit (305 aa).

This sequence belongs to the class-II aminoacyl-tRNA synthetase family. As to quaternary structure, tetramer of two alpha and two beta subunits.

Its subcellular location is the cytoplasm. The catalysed reaction is tRNA(Gly) + glycine + ATP = glycyl-tRNA(Gly) + AMP + diphosphate. In Streptococcus suis (strain 05ZYH33), this protein is Glycine--tRNA ligase alpha subunit.